The primary structure comprises 316 residues: Cell surface superoxide dismutase [Cu-Zn] 6 (316 aa).

The signal sequence occupies residues 1-18; the sequence is MIFIPIIILIYLVSIAAS. The Cu cation site is built by His78, His80, and His96. His96 and Asp119 together coordinate Zn(2+). Residue Asn128 is glycosylated (N-linked (GlcNAc...) asparagine). His159 provides a ligand contact to Cu cation. N-linked (GlcNAc...) asparagine glycosylation is found at Asn162 and Asn240. The disordered stretch occupies residues 243–263; it reads DNVYSPEETRPSDQNKKSHRH. Residues 249 to 258 show a composition bias toward basic and acidic residues; sequence EETRPSDQNK. Asn278 and Asn281 each carry an N-linked (GlcNAc...) asparagine glycan. A lipid anchor (GPI-anchor amidated serine) is attached at Ser288. Positions 289-316 are cleaved as a propeptide — removed in mature form; that stretch reads SDCLNDGMMVTGSVFGSLVLGIAAGIFV.

Belongs to the Cu-Zn superoxide dismutase family. Requires Cu cation as cofactor. The cofactor is Zn(2+). The GPI-anchor is attached to the protein in the endoplasmic reticulum and serves to target the protein to the cell surface. There, the glucosamine-inositol phospholipid moiety is cleaved off and the GPI-modified mannoprotein is covalently attached via its lipidless GPI glycan remnant to the 1,6-beta-glucan of the outer cell wall layer.

Its subcellular location is the secreted. The protein resides in the cell wall. It localises to the membrane. It carries out the reaction 2 superoxide + 2 H(+) = H2O2 + O2. Superoxide dismutases serve to convert damaging superoxide radicals, a key form of ROS, to less damaging hydrogen peroxide that can be converted into water by catalase action. May be involved protection against extracellular stress. The sequence is that of Cell surface superoxide dismutase [Cu-Zn] 6 (SOD6) from Candida albicans (strain SC5314 / ATCC MYA-2876) (Yeast).